The sequence spans 242 residues: Stress response regulator protein 1 (242 aa).

One can recognise a Response regulatory domain in the interval 118–236 (NFLLVDDNFI…FDHIITCIEK (119 aa)). Aspartate 169 bears the 4-aspartylphosphate mark.

Its function is as follows. Required for stress adaptation, morphogenesis and virulence. This is Stress response regulator protein 1 (SRR1) from Debaryomyces hansenii (strain ATCC 36239 / CBS 767 / BCRC 21394 / JCM 1990 / NBRC 0083 / IGC 2968) (Yeast).